Reading from the N-terminus, the 219-residue chain is Small ribosomal subunit protein eS1 (219 aa).

The protein belongs to the eukaryotic ribosomal protein eS1 family. Component of the small ribosomal subunit. Mature ribosomes consist of a small (40S) and a large (60S) subunit. The 40S subunit contains about 33 different proteins and 1 molecule of RNA (18S). The 60S subunit contains about 49 different proteins and 3 molecules of RNA (25S, 5.8S and 5S).

The protein localises to the cytoplasm. The protein is Small ribosomal subunit protein eS1 of Guillardia theta (Cryptophyte).